We begin with the raw amino-acid sequence, 632 residues long: Pescadillo homolog (632 aa).

The interval 306 to 341 (GDDADVDMDEGAKETDEEEDEDFVERPSKAQEVDDV) is disordered. Residues 307–328 (DDADVDMDEGAKETDEEEDEDF) show a composition bias toward acidic residues. The 99-residue stretch at 361-459 (RQNLLFSPYT…KIISSEGYGP (99 aa)) folds into the BRCT domain. Disordered regions lie at residues 485–535 (GEKA…QNPS), 565–585 (TKVH…EEDL), and 601–632 (MQYS…EAKA). The span at 492–516 (QEGEEEEEAAEQDEGESEDEEEDGK) shows a compositional bias: acidic residues. The segment covering 521–531 (AEYPPALLAAA) has biased composition (low complexity). 2 stretches are compositionally biased toward basic and acidic residues: residues 576-585 (QKEKKGEEDL) and 605-616 (NREKAAEKEKLE). A coiled-coil region spans residues 595–632 (AKLYEKMQYSNREKAAEKEKLEKKRKAIEKRKAKEAKA).

This sequence belongs to the pescadillo family. As to quaternary structure, component of the NOP7 complex, composed of ERB1, NOP7 and YTM1. The complex is held together by ERB1, which interacts with NOP7 via its N-terminal domain and with YTM1 via a high-affinity interaction between the seven-bladed beta-propeller domains of the 2 proteins. The NOP7 complex associates with the 66S pre-ribosome.

It localises to the nucleus. Its subcellular location is the nucleolus. The protein resides in the nucleoplasm. Component of the NOP7 complex, which is required for maturation of the 25S and 5.8S ribosomal RNAs and formation of the 60S ribosome. In Cryptococcus neoformans var. neoformans serotype D (strain B-3501A) (Filobasidiella neoformans), this protein is Pescadillo homolog.